The following is a 103-amino-acid chain: uncharacterized protein (103 aa).

A CHCH domain is found at 10-63 (FPECDHLKQIYDKCFTEFFQKFITPNYRHQYAVNPCERLHDVYKRCVEERLATQ). 2 short sequence motifs (cx9C motif) span residues 13–23 (CDHLKQIYDKC) and 45–55 (CERLHDVYKRC). 2 disulfide bridges follow: Cys13–Cys55 and Cys23–Cys45. Residues 80-90 (TDDDKLKDRQN) show a composition bias toward basic and acidic residues. A disordered region spans residues 80–103 (TDDDKLKDRQNNQKTNSENKCSSS). Over residues 91–103 (NQKTNSENKCSSS) the composition is skewed to polar residues.

The protein belongs to the TRIAP1/MDM35 family.

This is an uncharacterized protein from Caenorhabditis elegans.